Reading from the N-terminus, the 1955-residue chain is Rootletin (1955 aa).

5 coiled-coil regions span residues 29 to 58, 162 to 223, 284 to 1303, 1368 to 1579, and 1607 to 1863; these read EENR…ESIE, EENL…QQHT, LMRK…AVES, VGVT…EELR, and RRWE…RTKG. 5 disordered regions span residues 321-341, 391-451, 504-551, 907-935, and 961-998; these read VTEN…DLKR, LTTK…KKLD, LKER…RSLK, EKLN…NEAV, and RDLE…QKTL. Composition is skewed to basic and acidic residues over residues 326–341 and 396–451; these read MKSE…DLKR and GEID…KKLD. 3 stretches are compositionally biased toward basic and acidic residues: residues 907–931, 961–982, and 989–998; these read EKLN…ESSK, RDLE…KMEL, and EDRKKEQKTL.

Belongs to the rootletin family. Expressed in head ciliated neurons.

Its subcellular location is the cytoplasm. It is found in the cytoskeleton. The protein resides in the cilium basal body. It localises to the cilium axoneme. Functionally, major structural component of the ciliary rootlet, a cytoskeletal-like structure in ciliated cells which originates from the basal body at the proximal end of a cilium and extends proximally toward the cell nucleus. Required for cilia integrity and function in sensory neurons. Maintains cilia integrity, partly by modulating the assembly and transport of intraflagellar proteins along the ciliary axoneme. Required for normal mating behavior and normal responses to environmental and chemical stimuli. This is Rootletin from Caenorhabditis elegans.